The chain runs to 188 residues: Elongation factor P (188 aa).

Position 34 is an N6-(3,6-diaminohexanoyl)-5-hydroxylysine (lysine 34).

The protein belongs to the elongation factor P family. In terms of processing, may be beta-lysylated on the epsilon-amino group of Lys-34 by the combined action of EpmA and EpmB, and then hydroxylated on the C5 position of the same residue by EpmC (if this protein is present). Lysylation is critical for the stimulatory effect of EF-P on peptide-bond formation. The lysylation moiety may extend toward the peptidyltransferase center and stabilize the terminal 3-CCA end of the tRNA. Hydroxylation of the C5 position on Lys-34 may allow additional potential stabilizing hydrogen-bond interactions with the P-tRNA.

The protein resides in the cytoplasm. It participates in protein biosynthesis; polypeptide chain elongation. Involved in peptide bond synthesis. Alleviates ribosome stalling that occurs when 3 or more consecutive Pro residues or the sequence PPG is present in a protein, possibly by augmenting the peptidyl transferase activity of the ribosome. Modification of Lys-34 is required for alleviation. This chain is Elongation factor P, found in Actinobacillus succinogenes (strain ATCC 55618 / DSM 22257 / CCUG 43843 / 130Z).